The following is a 100-amino-acid chain: Putative pterin-4-alpha-carbinolamine dehydratase 2 (100 aa).

Belongs to the pterin-4-alpha-carbinolamine dehydratase family.

It catalyses the reaction (4aS,6R)-4a-hydroxy-L-erythro-5,6,7,8-tetrahydrobiopterin = (6R)-L-erythro-6,7-dihydrobiopterin + H2O. The polypeptide is Putative pterin-4-alpha-carbinolamine dehydratase 2 (Cupriavidus pinatubonensis (strain JMP 134 / LMG 1197) (Cupriavidus necator (strain JMP 134))).